Here is a 411-residue protein sequence, read N- to C-terminus: Acetylornithine aminotransferase (411 aa).

Pyridoxal 5'-phosphate-binding positions include 107–108 (GT) and phenylalanine 141. Position 144 (arginine 144) interacts with N(2)-acetyl-L-ornithine. Residue 227 to 230 (DEIQ) participates in pyridoxal 5'-phosphate binding. Lysine 256 carries the post-translational modification N6-(pyridoxal phosphate)lysine. N(2)-acetyl-L-ornithine is bound at residue threonine 284. Threonine 285 contacts pyridoxal 5'-phosphate.

This sequence belongs to the class-III pyridoxal-phosphate-dependent aminotransferase family. ArgD subfamily. Homodimer. Pyridoxal 5'-phosphate serves as cofactor.

It localises to the cytoplasm. The catalysed reaction is N(2)-acetyl-L-ornithine + 2-oxoglutarate = N-acetyl-L-glutamate 5-semialdehyde + L-glutamate. It participates in amino-acid biosynthesis; L-arginine biosynthesis; N(2)-acetyl-L-ornithine from L-glutamate: step 4/4. The chain is Acetylornithine aminotransferase from Xylella fastidiosa (strain 9a5c).